Here is a 120-residue protein sequence, read N- to C-terminus: MPKVYSYQEVAEHNGPENFWIIIDDKVYDVSQFKDEHPGGDEIIMDLGGQDATESFVDIGHSDEALRLLKGLYIGDVDKTSERVSVEKVSTSENQSKGSGTLVVILAILMLGVAYYLLNE.

Residues 2 to 78 form the Cytochrome b5 heme-binding domain; the sequence is PKVYSYQEVA…LKGLYIGDVD (77 aa). Residues H37 and H61 each contribute to the heme site. Residues 98 to 118 traverse the membrane as a helical segment; it reads GSGTLVVILAILMLGVAYYLL.

Belongs to the cytochrome b5 family.

The protein resides in the endoplasmic reticulum membrane. It is found in the microsome membrane. Membrane bound hemoprotein which function as an electron carrier for several membrane bound oxygenases. It plays a role in fatty-acid desaturation and is also involved in several steps of the sterol biosynthesis pathway, particularly in the 4-demethylation of the 4,4'-dimethyl zymosterol. The protein is Cytochrome b5 (CYB5) of Saccharomyces cerevisiae (strain ATCC 204508 / S288c) (Baker's yeast).